The chain runs to 76 residues: Sec-independent protein translocase protein TatA (76 aa).

A helical transmembrane segment spans residues 1-21 (MGGISITQLLIIVAIVVLLFG). Positions 45-76 (DDNKEKDAEFKSLSDDSETTAKTEKAKDKEQA) are disordered.

Belongs to the TatA/E family. In terms of assembly, the Tat system comprises two distinct complexes: a TatABC complex, containing multiple copies of TatA, TatB and TatC subunits, and a separate TatA complex, containing only TatA subunits. Substrates initially bind to the TatABC complex, which probably triggers association of the separate TatA complex to form the active translocon.

It is found in the cell inner membrane. Part of the twin-arginine translocation (Tat) system that transports large folded proteins containing a characteristic twin-arginine motif in their signal peptide across membranes. TatA could form the protein-conducting channel of the Tat system. This is Sec-independent protein translocase protein TatA from Pasteurella multocida (strain Pm70).